The primary structure comprises 427 residues: Endothelin-1 receptor (427 aa).

The N-terminal stretch at 1–20 is a signal peptide; it reads METFCFRVSFWVALLGCVIS. Over 21–80 the chain is Extracellular; it reads DNPESHSTNLSTHVDDFTTFRGTEFSLVVTTHRPTNLALPSNGSMHNYCPQQTKITSAFK. 2 N-linked (GlcNAc...) asparagine glycosylation sites follow: asparagine 29 and asparagine 62. A helical membrane pass occupies residues 81–102; it reads YINTVISCTIFIVGMVGNATLL. Topologically, residues 103–112 are cytoplasmic; it reads RIIYQNKCMR. The helical transmembrane segment at 113–132 threads the bilayer; the sequence is NGPNALIASLALGDLIYVVI. At 133–159 the chain is on the extracellular side; it reads DLPINVFKLLAGRWPFENHDFGVFLCK. A disulfide bridge links cysteine 158 with cysteine 239. A helical transmembrane segment spans residues 160-181; that stretch reads LFPFLQKSSVGITVLNLCALSV. Over 182–205 the chain is Cytoplasmic; that stretch reads DRYRAVASWSRVQGIGIPLVTAIE. The chain crosses the membrane as a helical span at residues 206-229; it reads IVSIWILSFILAIPEAIGFVMVPF. At 230-256 the chain is on the extracellular side; the sequence is EYKGEEHKTCMLNATSKFMEFYQDVKD. The chain crosses the membrane as a helical span at residues 257–278; it reads WWLFGFYFCMPLVCTAIFYTLM. Residues 279-306 lie on the Cytoplasmic side of the membrane; sequence TCEMLNRRNGSLRIALSEHLKQRREVAK. A helical transmembrane segment spans residues 307-328; it reads TVFCLVVIFALCWFPLHLSRIL. Residues 329 to 347 are Extracellular-facing; it reads KKTVYDEMDKNRCELLSFL. Residues 348–372 form a helical membrane-spanning segment; that stretch reads LLMDYIGINLATMNSCINPIALYFV. Residues 373–427 lie on the Cytoplasmic side of the membrane; the sequence is SKKFKNCFQSCLCCCCYQSKSLMTSVPMNGTSIQWKNHEQNNHNTERSSHKDSIN. Serine 425 carries the post-translational modification Phosphoserine.

Belongs to the G-protein coupled receptor 1 family. Endothelin receptor subfamily. EDNRA sub-subfamily. Interacts with HDAC7 and KAT5.

It is found in the cell membrane. Functionally, receptor for endothelin-1. Mediates its action by association with G proteins that activate a phosphatidylinositol-calcium second messenger system. The rank order of binding affinities for ET-A is: ET1 &gt; ET2 &gt;&gt; ET3. The polypeptide is Endothelin-1 receptor (Sus scrofa (Pig)).